We begin with the raw amino-acid sequence, 74 residues long: Putative defensin-like protein 186 (74 aa).

The N-terminal stretch at 1-22 (MKNSSIILVLVFFFFISSSGEA) is a signal peptide. Disulfide bonds link C25–C74, C31–C51, C37–C68, and C41–C70.

The protein belongs to the DEFL family.

It localises to the secreted. The polypeptide is Putative defensin-like protein 186 (LCR40) (Arabidopsis thaliana (Mouse-ear cress)).